A 274-amino-acid polypeptide reads, in one-letter code: Phosphoribosylaminoimidazole-succinocarboxamide synthase (274 aa).

This sequence belongs to the SAICAR synthetase family.

It carries out the reaction 5-amino-1-(5-phospho-D-ribosyl)imidazole-4-carboxylate + L-aspartate + ATP = (2S)-2-[5-amino-1-(5-phospho-beta-D-ribosyl)imidazole-4-carboxamido]succinate + ADP + phosphate + 2 H(+). It participates in purine metabolism; IMP biosynthesis via de novo pathway; 5-amino-1-(5-phospho-D-ribosyl)imidazole-4-carboxamide from 5-amino-1-(5-phospho-D-ribosyl)imidazole-4-carboxylate: step 1/2. The sequence is that of Phosphoribosylaminoimidazole-succinocarboxamide synthase from Nitrosopumilus maritimus (strain SCM1).